Consider the following 79-residue polypeptide: Alpha-actitoxin-Ms11a-4 (79 aa).

The first 23 residues, 1–23 (MKVLVAVLVFALLMCMFVDIAES), serve as a signal peptide directing secretion. The propeptide occupies 24 to 46 (RRRDNPEYPSGLRYDEEMGVFKR). Disulfide bonds link Cys47-Cys61, Cys54-Cys67, and Cys60-Cys76. Position 78 is a tyrosine amide (Tyr78).

It is found in the secreted. The protein resides in the nematocyst. Alpha-toxins act on postsynaptic membranes, they bind to the nicotinic acetylcholine receptors (nAChR) and thus inhibit them. This toxin very weakly competes with alpha-bungarotoxin for binding to orthosteric sites on muscle-type T.carlifornicus (IC(50)=14.95 uM) and human alpha-7/CHRNA7 nAChRs (IC(50)&gt;45 uM). The polypeptide is Alpha-actitoxin-Ms11a-4 (Metridium senile (Brown sea anemone)).